The following is a 146-amino-acid chain: Ribonuclease H (146 aa).

The 143-residue stretch at 1–143 (MEKKVTIYTD…CDELARLAVR (143 aa)) folds into the RNase H type-1 domain. Mg(2+)-binding residues include aspartate 10, glutamate 48, aspartate 70, and aspartate 135.

The protein belongs to the RNase H family. As to quaternary structure, monomer. The cofactor is Mg(2+).

It is found in the cytoplasm. It carries out the reaction Endonucleolytic cleavage to 5'-phosphomonoester.. In terms of biological role, endonuclease that specifically degrades the RNA of RNA-DNA hybrids. The sequence is that of Ribonuclease H from Chlorobium phaeovibrioides (strain DSM 265 / 1930) (Prosthecochloris vibrioformis (strain DSM 265)).